Reading from the N-terminus, the 2158-residue chain is MNVLVLGDQVADHLQLLENTYHRKNNASVKGFLDRATDVLLSEIAKLPKRQRENIPEFRTILNLVQLYRERGLAIPHVESALVTVSQLAYYIGYFADYPTDLPNPENKRVLGLCTGQLAASVVASSHTLDELLPIALEAVKLAFRTGLEVACQGEAIEQGPLSSEKWSTVVQDITEDEAMSLIDNFHKERKIPVSAHAYISAVAPTSITVSGPPSTTKELFEIEELSKKRKTPIPVFAPYHASHLYDASVIDRIIGDSAEVLKRYRSRALFHSASTGKCHITTDTLELVRVALREILLEPVRWSSLIEECVSQVLESGDTECTVFPIGATMVTNSLVSTLKAAGQSSLSVRVSKPWGPDWEGTKGRTQNDKIAIVGMSGRFPSAASHEELWELLAKGLDVHREIPSDRFDAQAHCDPSGKGKNKSHTPYGCFIDEPGMFDPRFFNMSPREAAQTDPMGRLALTTAYEALEMSGYVPNRTPSSMLNRIGTFYGQTSDDWREINAAENVDTYFITGGVRAFAPGRINYYFKFSGPSFSIDTACSSSLAAIQLACTSLWAGDCDTACAGGLNVLTNPDIFSGLSKGQFLSKTGGCKTYDNDADGYCRGDGCGTVILKRYEDAIADKDNILGCILGAATNHSAEAVSITHPHAGAQEFLYKKVLANAGVDAHEITYVEMHGTGTQAGDGIEMTSVTNAFAPRNRQRRPDQPLYLGAIKANIGHGEAASGINSLVKCMMMLKKNAIPANVGIKGVMNKTFPKDLAQRNVHIETEMVPYPRKGAEKRKMFLNNFSAAGGNTAIILEDGPLREAPKGVDPRTSQVVTITGRSISSLKKNIDNLIKYLDQNPDTTLPSLAYTTTARRIQHNYRVAVVVSDISQVKDALKNQIKDSYSPVAMVSTKTAFTFTGQGSQYTGLGKKLYEEMGSFKSDIHQLDNLARLHSLPSIIPLLDGSTDVAKLSPVVVQLGMACIQVALSRMWASWGVTPSAVIGHSLGEYAALHVAGVISASDMVLLVGRRAQLLEKECTAHTHGMLAVKGGVESISDALGDKMIEIACMNGPEETVLCGKVDVIESTADALATKGFKATKLNVPFAFHSAQVEPILEKFQDVATSVKFKKPVVPVLSPLNGEVIREAGIIGPKYLADHARRTVDFWHALSAGKDEKAFDEKTAWLEIGAHPVCSGMVKSSLGGSPCTAGSLRRNEDPWKTLANSVSTLFLAGVGIDFPEYHRQFDDAHELLTLPTYAFDNKKYWLDYHNNWTLTKGEARTDAAPKTIEAPAEVKSKLSTTSCQRIVREELHANSGTVVVQSDLSDPKLRATISGHQVNGTPLCPSSLYADQAMTLADYLYKQLRPNLPTPGLNVCAMEVPKTLIPQYPPPAGGQHLQIEATADLEHNRVEVRFRTVPADGSKILAEHAFGTVKYEDVSQWKEEWARTQYMVQTQIDLLKQKLVSGSAHKVLRGMAYKLFKALVSYADNYRGMEEVILDGKQTEATATVKFQTTPEDGSFFCSPYWIDSLAHLSGFIVNASDHLDSENSVYISHGWGSIKISKQLSPEKRYQSYVRMQPAPGNISVGDVYILEGEEVIGLVTGLKFQNIARRVLNIMMPPAGGAAKAAGGKAAPAKKAASPTLAPAKAAKPAAKTSKPSKARAKPAADSTTSRVMKIIATETDVDMAELVDEAAFENLGVDSLMSLTISAKFREELDLEISSTLFTDHPTVGQMKKFFSQYDGAPIPDDGDDSDGTDEPSNFSTPSYGADNASTPPSSAPSVNGKSSPENHEVLESTEVSLARKIVAEEMGVDVAEITDKADLSEMGMDSLMSLTILGALRESTGIDLPSTFLVTNVTIEDIENELGMRPKPKPKAEAAPPKSSAKASPSANKQPQLSAVNEKLKNIVDVSQYPPANSVLLQGNPKIATKKMFLVPDGSGSATSYISVPPISPDLAVFGLNCPFMKSPEKWTCGVEGVSALYLAEIKRRQPKGPYIIGGWSAGGVMAYEVTQQLVNSGEVVERLVLIDAPCPVALDPLPARLHIFFDQIGLLGTGKPGGTPKWLLPHFASAIQNLKDYEPIPMDPQRAPEVFAIWCTDGVCPNPDDPRPPPGEGEDPAPMKWLLNNRTDFEDNGWAQLLPKKNFTYAVMGGNHFTMMKGDHGAKLGEHLKEGLKL.

The tract at residues 4–241 (LVLGDQVADH…TPIPVFAPYH (238 aa)) is N-terminal acylcarrier protein transacylase domain (SAT). The 433-residue stretch at 369 to 801 (NDKIAIVGMS…GGNTAIILED (433 aa)) folds into the Ketosynthase family 3 (KS3) domain. Residues Cys-541, His-676, and His-719 each act as for beta-ketoacyl synthase activity in the active site. A malonyl-CoA:ACP transacylase (MAT) domain region spans residues 900–1215 (FTFTGQGSQY…ANSVSTLFLA (316 aa)). Ser-989 (for acyl/malonyl transferase activity) is an active-site residue. A product template (PT) domain region spans residues 1285–1603 (SCQRIVREEL…RRVLNIMMPP (319 aa)). The N-terminal hotdog fold stretch occupies residues 1287-1423 (QRIVREELHA…GTVKYEDVSQ (137 aa)). A PKS/mFAS DH domain is found at 1287–1598 (QRIVREELHA…FQNIARRVLN (312 aa)). His-1319 functions as the Proton acceptor; for dehydratase activity in the catalytic mechanism. Positions 1451 to 1598 (AHKVLRGMAY…FQNIARRVLN (148 aa)) are C-terminal hotdog fold. Asp-1511 (proton donor; for dehydratase activity) is an active-site residue. Low complexity predominate over residues 1619–1639 (KKAASPTLAPAKAAKPAAKTS). Positions 1619-1654 (KKAASPTLAPAKAAKPAAKTSKPSKARAKPAADSTT) are disordered. One can recognise a Carrier 1 domain in the interval 1651 to 1725 (DSTTSRVMKI…QMKKFFSQYD (75 aa)). Position 1685 is an O-(pantetheine 4'-phosphoryl)serine (Ser-1685). Residues 1723–1779 (QYDGAPIPDDGDDSDGTDEPSNFSTPSYGADNASTPPSSAPSVNGKSSPENHEVLES) are disordered. Residues 1731–1740 (DDGDDSDGTD) show a composition bias toward acidic residues. A compositionally biased stretch (polar residues) spans 1743-1770 (SNFSTPSYGADNASTPPSSAPSVNGKSS). One can recognise a Carrier 2 domain in the interval 1779-1853 (STEVSLARKI…DIENELGMRP (75 aa)). Ser-1813 is subject to O-(pantetheine 4'-phosphoryl)serine. The disordered stretch occupies residues 1847 to 1879 (NELGMRPKPKPKAEAAPPKSSAKASPSANKQPQ). Over residues 1860 to 1876 (EAAPPKSSAKASPSANK) the composition is skewed to low complexity. The thioesterase (TE) domain stretch occupies residues 1894 to 2144 (SQYPPANSVL…NHFTMMKGDH (251 aa)).

Pantetheine 4'-phosphate serves as cofactor.

Its function is as follows. Non-reducing polyketide synthase; part of a gene cluster that mediates the biosynthesis of a yet unidentified natural product. This is Non-reducing polyketide synthase Preu8 from Preussia isomera (Coprophilous fungus).